We begin with the raw amino-acid sequence, 494 residues long: MGGNIKFLEAMVDFLERNVKTIFSYPGEQILPLYNEIEGSSIKNIMVRDERGAGFMADGYARITNYIGVCLATAGPGATNLTTPIATAYKDNSSVLAITGRCQRKYIGKNYFQEVNMDFLNFYKGYFVDKAEVSYIAKAFADCLFNKKPVQLNIPVDLYKEEAKDINITTYTDIYKDDETPSNNIKEIDVKKPLFLIGQGIFGTLSYKEIVKISKILEKINCPIATTFPARGVINEKLENCIGLVGRRGDLKSLLEADKIINIGSSLSYNTYVESVREKLLSKTENIQLKPKSIKELKEFFENLDVKNSSWIYKNSNKFQPSGDYSNKIYEIIKNIPEDAIIVTDAGKHTVFTCLLKTCVIPRNIISSHSFGTMGFGLPASIGVKFGTIDFNIDREVVLISGDGGFLMNVEELQVVAENNLKILMVVMKNNSLAEFCKIKNPNFNKIADAFEIDNCYIENVDEIGSEIKGYLKKNKPLLVVVETENEPLPKPNI.

Belongs to the TPP enzyme family.

This is an uncharacterized protein from Methanocaldococcus jannaschii (strain ATCC 43067 / DSM 2661 / JAL-1 / JCM 10045 / NBRC 100440) (Methanococcus jannaschii).